Reading from the N-terminus, the 196-residue chain is Fucoxanthin-chlorophyll a-c binding protein A, chloroplastic (196 aa).

A chloroplast-targeting transit peptide spans 1-31 (MKFAVFASLLASRAAFAPAQQSARTSVATNM). Helical transmembrane passes span 73–94 (ICMLAVAGYLTQEAGIRLPGDI), 114–134 (VPGAGIAQIIAFIGFFEIAVM), and 174–196 (GRAAQMGILALMVHEQLGVSILP).

This sequence belongs to the fucoxanthin chlorophyll protein family. The LHC complex of chromophytic algae is composed of fucoxanthin, chlorophyll A and C bound non-covalently by fucoxanthin chlorophyll proteins (FCPs). The ratio of the pigments in LHC; fucoxanthin: chlorophyll C: chlorophyll A; (0.6-1): (0.1-0.3): (1).

The protein resides in the plastid. It is found in the chloroplast thylakoid membrane. In terms of biological role, the light-harvesting complex (LHC) functions as a light receptor, it captures and delivers excitation energy to photosystems with which it is closely associated. Energy is transferred from the carotenoid and chlorophyll C (or B) to chlorophyll A and the photosynthetic reaction centers where it is used to synthesize ATP and reducing power. This chain is Fucoxanthin-chlorophyll a-c binding protein A, chloroplastic (FCPA), found in Phaeodactylum tricornutum (Diatom).